A 335-amino-acid chain; its full sequence is Glycerol-3-phosphate dehydrogenase [NAD(P)+] (335 aa).

NADPH is bound by residues serine 12, tryptophan 13, arginine 33, arginine 34, and lysine 107. Lysine 107, glycine 134, and serine 136 together coordinate sn-glycerol 3-phosphate. Position 138 (alanine 138) interacts with NADPH. Lysine 189, aspartate 242, serine 252, arginine 253, and asparagine 254 together coordinate sn-glycerol 3-phosphate. Lysine 189 (proton acceptor) is an active-site residue. Arginine 253 provides a ligand contact to NADPH. Valine 277 and glutamate 279 together coordinate NADPH.

It belongs to the NAD-dependent glycerol-3-phosphate dehydrogenase family.

Its subcellular location is the cytoplasm. It catalyses the reaction sn-glycerol 3-phosphate + NAD(+) = dihydroxyacetone phosphate + NADH + H(+). The enzyme catalyses sn-glycerol 3-phosphate + NADP(+) = dihydroxyacetone phosphate + NADPH + H(+). The protein operates within membrane lipid metabolism; glycerophospholipid metabolism. Catalyzes the reduction of the glycolytic intermediate dihydroxyacetone phosphate (DHAP) to sn-glycerol 3-phosphate (G3P), the key precursor for phospholipid synthesis. This is Glycerol-3-phosphate dehydrogenase [NAD(P)+] from Moorella thermoacetica (strain ATCC 39073 / JCM 9320).